The following is a 142-amino-acid chain: Large ribosomal subunit protein uL11 (142 aa).

This sequence belongs to the universal ribosomal protein uL11 family. In terms of assembly, part of the ribosomal stalk of the 50S ribosomal subunit. Interacts with L10 and the large rRNA to form the base of the stalk. L10 forms an elongated spine to which L12 dimers bind in a sequential fashion forming a multimeric L10(L12)X complex. Post-translationally, one or more lysine residues are methylated.

In terms of biological role, forms part of the ribosomal stalk which helps the ribosome interact with GTP-bound translation factors. In Hahella chejuensis (strain KCTC 2396), this protein is Large ribosomal subunit protein uL11.